Here is a 159-residue protein sequence, read N- to C-terminus: Ribosome maturation factor RimP (159 aa).

This sequence belongs to the RimP family.

Its subcellular location is the cytoplasm. Its function is as follows. Required for maturation of 30S ribosomal subunits. This is Ribosome maturation factor RimP from Streptococcus pneumoniae serotype 2 (strain D39 / NCTC 7466).